We begin with the raw amino-acid sequence, 87 residues long: Defensin-like protein 218 (87 aa).

Positions 1-19 are cleaved as a signal peptide; it reads MKTIVCFLTILILVSSCES. 3 cysteine pairs are disulfide-bonded: cysteine 51–cysteine 70, cysteine 54–cysteine 75, and cysteine 58–cysteine 77.

The protein belongs to the DEFL family.

It is found in the secreted. The chain is Defensin-like protein 218 from Arabidopsis thaliana (Mouse-ear cress).